The following is a 1338-amino-acid chain: Aldehyde oxidase 1 (1338 aa).

The 88-residue stretch at 5–92 (SELLFYVNGR…GTAVTTVEGI (88 aa)) folds into the 2Fe-2S ferredoxin-type domain. The Mo-molybdopterin site is built by glutamine 113 and cysteine 151. Residues 236–421 (FGSERMMWFS…VSVNIPYSRK (186 aa)) enclose the FAD-binding PCMH-type domain. Residues 264 to 271 (VIMGNTSV), alanine 345, serine 354, histidine 358, aspartate 367, and leucine 411 each bind FAD. Residues 806 to 807 (AF) and methionine 1047 each bind Mo-molybdopterin. Serine 1068 is subject to Phosphoserine. Mo-molybdopterin is bound by residues 1088-1091 (GSVV), glutamine 1203, and leucine 1268. The active-site Proton acceptor; for azaheterocycle hydroxylase activity is glutamate 1270.

Belongs to the xanthine dehydrogenase family. As to quaternary structure, homodimer. The cofactor is [2Fe-2S] cluster. It depends on FAD as a cofactor. Mo-molybdopterin serves as cofactor. Detected at high levels in liver, also detected in lung, kidney, lacrimal gland and olfactory mucosa.

Its subcellular location is the cytoplasm. The enzyme catalyses an aldehyde + O2 + H2O = a carboxylate + H2O2 + H(+). It catalyses the reaction retinal + O2 + H2O = retinoate + H2O2 + H(+). Functionally, oxidase with broad substrate specificity, oxidizing aromatic azaheterocycles, such as N1-methylnicotinamide, N-methylphthalazinium and phthalazine, as well as aldehydes, such as benzaldehyde, retinal, pyridoxal, and vanillin. Plays a key role in the metabolism of xenobiotics and drugs containing aromatic azaheterocyclic substituents. Participates in the bioactivation of prodrugs such as famciclovir, catalyzing the oxidation step from 6-deoxypenciclovir to penciclovir, which is a potent antiviral agent. Is probably involved in the regulation of reactive oxygen species homeostasis. May be a prominent source of superoxide generation via the one-electron reduction of molecular oxygen. May also catalyze nitric oxide (NO) production via the reduction of nitrite to NO with NADH or aldehyde as electron donor. May play a role in adipogenesis. The chain is Aldehyde oxidase 1 (AOX1) from Macaca fascicularis (Crab-eating macaque).